The primary structure comprises 405 residues: Type II secretion system protein F (405 aa).

Residues 1-169 (MPLYRYKALD…SRALKGKVIN (169 aa)) lie on the Cytoplasmic side of the membrane. Ca(2+) contacts are provided by Asp-98, Gln-151, and Asp-155. A helical transmembrane segment spans residues 170 to 190 (ALIYPAILLAVVGCALLFLLG). Over 191-218 (YVVPQFAQMYESLDVALPWFTQAVLSVG) the chain is Periplasmic. Residues 219 to 239 (LLVRDWWLVLVVIPGVLGLWL) traverse the membrane as a helical segment. Residues 240–370 (DRKRRNAAFR…LETAQAIDRA (131 aa)) are Cytoplasmic-facing. The chain crosses the membrane as a helical span at residues 371–391 (LAALVPLITLVLASVVGLVII). The Periplasmic portion of the chain corresponds to 392 to 405 (SVLVPLYDLTNAIG).

The protein belongs to the GSP F family. As to quaternary structure, type II secretion system is composed of four main components: the outer membrane complex, the inner membrane complex, the cytoplasmic secretion ATPase and the periplasm-spanning pseudopilus. Homodimer. Interacts with XpsE and XpsL components.

The protein resides in the cell inner membrane. Component of the type II secretion system inner membrane complex required for the energy-dependent secretion of extracellular factors such as proteases and toxins from the periplasm. The protein is Type II secretion system protein F (xpsF) of Xanthomonas campestris pv. campestris (strain ATCC 33913 / DSM 3586 / NCPPB 528 / LMG 568 / P 25).